The chain runs to 549 residues: Zinc finger protein 266 (549 aa).

The 42-residue stretch at 1–42 folds into the KRAB domain; that stretch reads MLENYKNLATVGYQLFKPSLISWLEQEESRTVQRGDFQASEW. The C2H2-type 1; degenerate zinc finger occupies 156–178; the sequence is FDCSDSGKSFINHSHLQGHLRTH. The segment at 184–206 adopts a C2H2-type 2; degenerate zinc-finger fold; it reads HEWKECGRGFIHSTDLAVRIQTH. 12 consecutive C2H2-type zinc fingers follow at residues 212–234, 240–262, 268–290, 296–318, 324–346, 352–374, 380–402, 408–430, 436–458, 464–486, 492–514, and 520–542; these read YKCK…MGTH, YECK…RKTH, YKCK…MKIH, YECK…LKTH, FECK…FRIH, YKCK…ARTH, YECK…TRTH, FECV…LRIH, FECL…MRTH, FTCM…MRIH, YKCK…ERTH, and YECK…ERRH. The disordered stretch occupies residues 530–549; sequence SSSSSFRNHERRHADERLSA.

This sequence belongs to the krueppel C2H2-type zinc-finger protein family.

It localises to the nucleus. In terms of biological role, may be involved in transcriptional regulation. The protein is Zinc finger protein 266 (ZNF266) of Homo sapiens (Human).